We begin with the raw amino-acid sequence, 770 residues long: MSKRPKLGGFSIPRPTSYSFERSQPPQRLYVPADDPDLDDIAFSDDAAAPSDAPPAGGGGAAGDEEEIDPLDAFMAEIQEEIRAPPPAPKPEALRRADSDDEDDPVESFLRAKKDSGLALAADAMHAGYDSDEEVYAAAKAVDAGMMEYDSDDNPIVVDKKKIEPIPPLDHSTIEYEPFNKDFYEEKPSVSGMSEQEVADYMKSLAIRVSGFDVPRPIKSFADCGFPVQLMNAIAKQGYEKPTTIQCQALPIVLSGRDIIGIAKTGSGKTAAFVLPMIVHIMDQPELEKEEGPIGVVCAPTRELAHQIYLEAKKFAKPYNLRVAAVYGGVSKFDQFKELKAGCEIVIATPGRLIDLLKMKALKMFRATYLVLDEADRMFDLGFEPQIRSIVGQIRPDRQTLLFSATMPYKVERLAREILTDPIRVTVGQVGSANEDIKQVVNVLPSDAEKMPWLLEKLPGMIDDGDVLVFAAKKARVDEIESQLNQRGFRIAALHGDKDQASRMETLQKFKSGVYHVLVATDVAARGLDIKSIKTVVNFDIAKEMDMHIHRIGRTGRAGDKDGTAYTLITQKEVRFAGELVHCLIAAGQDVPNELMDLAMKDGRFRANRDSRKGGKKSGKGKGGGGGGGGGSGARGRGRGVRGVDFGLGIGYNAESGSVPAPRSAALNSLKTGMMQNFKSSFVSASSSNTPSNSAPSRGAPSSFVRPALRGFVSGGTIGGDANQARAVLPAPSFVPASRPAENTVENANPNPESSRDRTRERKRPSGWDR.

The segment at 1–106 (MSKRPKLGGF…ADSDDEDDPV (106 aa)) is disordered. Polar residues predominate over residues 14–26 (RPTSYSFERSQPP). The span at 34 to 43 (DDPDLDDIAF) shows a compositional bias: acidic residues. Over residues 44 to 55 (SDDAAAPSDAPP) the composition is skewed to low complexity. The Q motif motif lies at 219–247 (KSFADCGFPVQLMNAIAKQGYEKPTTIQC). Positions 250–425 (LPIVLSGRDI…REILTDPIRV (176 aa)) constitute a Helicase ATP-binding domain. 263–270 (AKTGSGKT) serves as a coordination point for ATP. Residues 373–376 (DEAD) carry the DEAD box motif. The region spanning 436-599 (DIKQVVNVLP…DVPNELMDLA (164 aa)) is the Helicase C-terminal domain. The segment covering 604-613 (RFRANRDSRK) has biased composition (basic and acidic residues). 3 disordered regions span residues 604–640 (RFRA…RGRG), 683–704 (VSAS…PSSF), and 729–770 (LPAP…GWDR). The span at 621–635 (GKGGGGGGGGGSGAR) shows a compositional bias: gly residues. A compositionally biased stretch (low complexity) spans 683–697 (VSASSSNTPSNSAPS). Polar residues predominate over residues 744 to 753 (TVENANPNPE). Positions 754-770 (SSRDRTRERKRPSGWDR) are enriched in basic and acidic residues.

This sequence belongs to the DEAD box helicase family.

The catalysed reaction is ATP + H2O = ADP + phosphate + H(+). The sequence is that of DEAD-box ATP-dependent RNA helicase 24 from Oryza sativa subsp. japonica (Rice).